Here is a 281-residue protein sequence, read N- to C-terminus: Para-Rep C1 (281 aa).

Positions 3 to 97 constitute a CRESS-DNA virus Rep endonuclease domain; sequence TLQGTFWCFT…VAGPWTYGEL (95 aa). An RCR-1 motif is present at residues 10 to 13; that stretch reads CFTL. A divalent metal cation contacts are provided by glutamate 36 and histidine 42. Residues 42 to 44 carry the RCR-2 motif; that stretch reads HLQ. The short motif at 51–71 is the Nuclear localization signal element; that stretch reads KRSTLKMMKELLPGAHLEVSK. The active-site For DNA cleavage activity is tyrosine 80. The RCR-3 motif lies at 80–83; that stretch reads YAMK. An a divalent metal cation-binding site is contributed by glutamate 85. Positions 97 to 103 match the Nuclear localization signal motif; sequence LLKKGSN. 173 to 181 serves as a coordination point for ATP; sequence GPQGGEGKT.

It belongs to the nanoviridea/circoviridae replication-associated protein family. As to quaternary structure, homooligomer (Potential). Rep binds to repeated DNA motifs (iterons). Requires Mg(2+) as cofactor. It depends on Mn(2+) as a cofactor.

The protein localises to the host nucleus. The enzyme catalyses ATP + H2O = ADP + phosphate + H(+). Its function is as follows. Initiates and terminates the replication only of its own subviral DNA molecule. The closed circular ssDNA genome is first converted to a superhelical dsDNA. Rep binds a specific hairpin at the genome origin of replication. Introduces an endonucleolytic nick within the intergenic region of the genome, thereby initiating the rolling circle replication (RCR). Following cleavage, binds covalently to the 5'-phosphate of DNA as a tyrosyl ester. The cleavage gives rise to a free 3'-OH that serves as a primer for the cellular DNA polymerase. The polymerase synthesizes the (+) strand DNA by rolling circle mechanism. After one round of replication, a Rep-catalyzed nucleotidyl transfer reaction releases a circular single-stranded virus genome, thereby terminating the replication. Displays origin-specific DNA cleavage, nucleotidyl transferase, ATPase and helicase activities. The polypeptide is Para-Rep C1 (C1) (Milk vetch dwarf C1 alphasatellite (MVDC1A)).